The primary structure comprises 154 residues: UPF0225 protein YE2246 (154 aa).

Belongs to the UPF0225 family.

This Yersinia enterocolitica serotype O:8 / biotype 1B (strain NCTC 13174 / 8081) protein is UPF0225 protein YE2246.